The chain runs to 250 residues: MTRINTNTQKNNNTKFSKLILGVMVSSIVLSGCSATPERMEKFSYEPNYPMNIPKKTVPKNGSLYQSGDAITLFDDSRAHKVGDIITINLAENFDAKKKDEAKYDKSNQQNFGLNGQAAVGSNASVFGGNVSVPGLGSGIGIGYGSDGSFAGKSDVKQKSSLSGSIAVTVVQVISNGNLVIRGEKWITIHEGEEVIRFAGIVRPQDIRPDNTIDSEKVADVRLIYKDTGISGDTNRPGAMTQWLHKYWPL.

The signal sequence occupies residues 1–32 (MTRINTNTQKNNNTKFSKLILGVMVSSIVLSG). A lipid anchor (N-palmitoyl cysteine) is attached at C33. A lipid anchor (S-diacylglycerol cysteine) is attached at C33.

This sequence belongs to the FlgH family. In terms of assembly, the basal body constitutes a major portion of the flagellar organelle and consists of four rings (L,P,S, and M) mounted on a central rod.

The protein resides in the cell outer membrane. It localises to the bacterial flagellum basal body. In terms of biological role, assembles around the rod to form the L-ring and probably protects the motor/basal body from shearing forces during rotation. The chain is Flagellar L-ring protein from Hydrogenovibrio crunogenus (strain DSM 25203 / XCL-2) (Thiomicrospira crunogena).